Consider the following 353-residue polypeptide: Heat-inducible transcription repressor HrcA (353 aa).

It belongs to the HrcA family.

Negative regulator of class I heat shock genes (grpE-dnaK-dnaJ and groELS operons). Prevents heat-shock induction of these operons. The sequence is that of Heat-inducible transcription repressor HrcA from Synechococcus elongatus (strain ATCC 33912 / PCC 7942 / FACHB-805) (Anacystis nidulans R2).